A 600-amino-acid polypeptide reads, in one-letter code: Brain-enriched guanylate kinase-associated protein (600 aa).

Methionine 1 carries the N-acetylmethionine modification. Residue tyrosine 137 is modified to Phosphotyrosine. Positions 192–222 are disordered; sequence PGSLSSRMSDASARDLGYRDGVEKSGPRPPY. Serine 200 carries the post-translational modification Phosphoserine. The segment covering 203–217 has biased composition (basic and acidic residues); it reads SARDLGYRDGVEKSG. Phosphoserine is present on residues serine 229 and serine 246. The residue at position 249 (threonine 249) is a Phosphothreonine. A Phosphoserine modification is found at serine 265. Residues 298 to 317 are disordered; it reads SSYSSFSATSEEKEHAQAGT. Serine 372 bears the Phosphoserine mark. An Asymmetric dimethylarginine modification is found at arginine 380. Phosphoserine is present on residues serine 463, serine 473, serine 483, serine 485, serine 508, serine 510, and serine 514. Residues 537-590 form a disordered region; the sequence is GAGSSPEPEHGSRESLEPSSMEASPEMHPPTRLSPQQAFPRTGGSGLSRKDSLT. Residues 543 to 552 show a composition bias toward basic and acidic residues; it reads EPEHGSRESL. Residues serine 560 and serine 570 each carry the phosphoserine modification.

As to quaternary structure, interacts with DLG4 and DLGAP1 and forms a ternary complex.

It localises to the cytoplasm. It is found in the membrane. May sustain the structure of the postsynaptic density (PSD). The polypeptide is Brain-enriched guanylate kinase-associated protein (Begain) (Mus musculus (Mouse)).